Here is a 199-residue protein sequence, read N- to C-terminus: Probable chemoreceptor glutamine deamidase CheD (199 aa).

It belongs to the CheD family.

The catalysed reaction is L-glutaminyl-[protein] + H2O = L-glutamyl-[protein] + NH4(+). Probably deamidates glutamine residues to glutamate on methyl-accepting chemotaxis receptors (MCPs), playing an important role in chemotaxis. The polypeptide is Probable chemoreceptor glutamine deamidase CheD (Cereibacter sphaeroides (strain ATCC 17029 / ATH 2.4.9) (Rhodobacter sphaeroides)).